Here is a 510-residue protein sequence, read N- to C-terminus: 2,3-bisphosphoglycerate-independent phosphoglycerate mutase (510 aa).

Positions 12 and 62 each coordinate Mn(2+). Ser62 (phosphoserine intermediate) is an active-site residue. Residues His123, 153 to 154 (RD), Arg185, Arg191, 260 to 263 (RPDR), and Lys333 each bind substrate. Residues Asp400, His404, Asp441, His442, and His460 each contribute to the Mn(2+) site.

Belongs to the BPG-independent phosphoglycerate mutase family. As to quaternary structure, monomer. It depends on Mn(2+) as a cofactor.

The enzyme catalyses (2R)-2-phosphoglycerate = (2R)-3-phosphoglycerate. It functions in the pathway carbohydrate degradation; glycolysis; pyruvate from D-glyceraldehyde 3-phosphate: step 3/5. Functionally, catalyzes the interconversion of 2-phosphoglycerate and 3-phosphoglycerate. This Clostridium acetobutylicum (strain ATCC 824 / DSM 792 / JCM 1419 / IAM 19013 / LMG 5710 / NBRC 13948 / NRRL B-527 / VKM B-1787 / 2291 / W) protein is 2,3-bisphosphoglycerate-independent phosphoglycerate mutase.